Reading from the N-terminus, the 564-residue chain is Potassium-transporting ATPase potassium-binding subunit (564 aa).

10 helical membrane-spanning segments follow: residues 4–24 (YDYLLLLAFFAIVLLPAPWLG), 67–87 (TLALLAFNLAGFLLLFAVLLL), 135–155 (IGLTVQNFVSAATGLAVLVAL), 179–199 (LYGLLPLCLVLALLLVWQGVP), 258–278 (FEVASIILIPVALVFTFGHYV), 286–306 (AIIACMLALFLIGGSTALWSE), 382–402 (AGLYGMLLFVLIAVFLAGLMI), 420–440 (LLVATLLVMPVGVLILGAIAA), 487–507 (VMIGLAMLIGRFGYILPVLAL), and 534–554 (LLLLTILLVGGLTFLPTLALG).

The protein belongs to the KdpA family. As to quaternary structure, the system is composed of three essential subunits: KdpA, KdpB and KdpC.

The protein resides in the cell inner membrane. Functionally, part of the high-affinity ATP-driven potassium transport (or Kdp) system, which catalyzes the hydrolysis of ATP coupled with the electrogenic transport of potassium into the cytoplasm. This subunit binds the periplasmic potassium ions and delivers the ions to the membrane domain of KdpB through an intramembrane tunnel. The chain is Potassium-transporting ATPase potassium-binding subunit from Pseudomonas entomophila (strain L48).